We begin with the raw amino-acid sequence, 281 residues long: Phosphatidylglycerol--prolipoprotein diacylglyceryl transferase (281 aa).

The next 4 helical transmembrane spans lie at 29-49, 64-84, 100-120, and 124-144; these read FYSL…GKMI, LFFY…VLFY, GGMS…FVSW, and LNWL…MFLG. Residue Arg145 participates in a 1,2-diacyl-sn-glycero-3-phospho-(1'-sn-glycerol) binding. 3 helical membrane-spanning segments follow: residues 180–200, 209–229, and 248–268; these read QLYQ…LLFW, GVLV…NEFF, and GQWL…YALT.

It belongs to the Lgt family.

The protein resides in the cell inner membrane. The enzyme catalyses L-cysteinyl-[prolipoprotein] + a 1,2-diacyl-sn-glycero-3-phospho-(1'-sn-glycerol) = an S-1,2-diacyl-sn-glyceryl-L-cysteinyl-[prolipoprotein] + sn-glycerol 1-phosphate + H(+). It participates in protein modification; lipoprotein biosynthesis (diacylglyceryl transfer). Its function is as follows. Catalyzes the transfer of the diacylglyceryl group from phosphatidylglycerol to the sulfhydryl group of the N-terminal cysteine of a prolipoprotein, the first step in the formation of mature lipoproteins. This is Phosphatidylglycerol--prolipoprotein diacylglyceryl transferase from Erythrobacter litoralis (strain HTCC2594).